The sequence spans 771 residues: Assimilatory nitrate reductase electron transfer subunit (771 aa).

43–79 (YNRILLSSVLQGEASLDDITLNSKDWYDKHGITLYTG) lines the FAD pocket. 4 residues coordinate [2Fe-2S] cluster: Cys-414, Cys-416, Cys-449, and Cys-452.

FAD is required as a cofactor. [2Fe-2S] cluster serves as cofactor.

In terms of biological role, required for nitrate assimilation. The protein is Assimilatory nitrate reductase electron transfer subunit (nasB) of Bacillus subtilis (strain 168).